A 331-amino-acid polypeptide reads, in one-letter code: MIVSRQVIRSVVRKSFNRLCSANVVALPSGSTKEALKELRRKTGYSYVNCRKALNEFGPDNLDEAIKWLKKRAIEEGWEKAAKLGDRPTRQGIVSVMTKGNKAAIVELNCETDFVSRNEDFKRLVEDVTKAVLHAADRDGTSTHGFELLNSNINSLKTSENGMLVKDLITEAIGRLGENITLSRAQLILAPPNVQLFGYAHPKEGTDRVYMGRYVSVVGLKGSNKTDFPTEKLGFQLCQHVVGMRSLTLGTPLPVKKTSVKDEVSQDDEINAFYNGEVTHIDENETQLLRQSFMLNPSQTVHEYVTGHGASIVDFYRTELSSNVSEESFQS.

The transit peptide at 1-14 (MIVSRQVIRSVVRK) directs the protein to the mitochondrion.

The protein belongs to the EF-Ts family.

The protein resides in the mitochondrion. Its function is as follows. Associates with the EF-Tu.GDP complex and induces the exchange of GDP to GTP. It remains bound to the aminoacyl-tRNA.EF-Tu.GTP complex up to the GTP hydrolysis stage on the ribosome. This Brugia malayi (Filarial nematode worm) protein is Elongation factor Ts, mitochondrial.